A 296-amino-acid chain; its full sequence is Peptide transport system permease protein SapC (296 aa).

Residues methionine 1–proline 28 lie on the Cytoplasmic side of the membrane. Residues alanine 29–isoleucine 49 form a helical membrane-spanning segment. Over alanine 50–threonine 98 the chain is Periplasmic. The helical transmembrane segment at valine 99–valine 119 threads the bilayer. The ABC transmembrane type-1 domain occupies valine 99–glycine 284. At alanine 120–histidine 133 the chain is on the cytoplasmic side. Residues isoleucine 134–alanine 154 traverse the membrane as a helical segment. Residues glycine 155–aspartate 196 lie on the Periplasmic side of the membrane. A helical transmembrane segment spans residues glycine 197–valine 217. At threonine 218–arginine 222 the chain is on the cytoplasmic side. A helical transmembrane segment spans residues alanine 223–leucine 243. Topologically, residues proline 244–glutamate 257 are periplasmic. Residues leucine 258–leucine 278 traverse the membrane as a helical segment. The Cytoplasmic segment spans residues leucine 279–glutamate 296.

Belongs to the binding-protein-dependent transport system permease family. OppBC subfamily.

Its subcellular location is the cell inner membrane. Functionally, involved in a peptide intake transport system that plays a role in the resistance to antimicrobial peptides. This Salmonella typhi protein is Peptide transport system permease protein SapC (sapC).